Reading from the N-terminus, the 379-residue chain is MTNTRKNHPLMKIINNSFIDLPTPPNISSLWNFGSLLGACLTIQVITGLFLAMHYTADTTTAFSSVTHICRDVNYGWTIRYLHANGASMFFMCLFIHVGRGLYYGSFALLETWNIGIMLLFSVMATAFMGYVLPWGQMSFWGATVITNLLSAIPYVGTNLVEWIWGGFSVGKPTLTRFFALHFILPFIISALAMIHLLFLHETGSNNPLGMSSNSDKIPFHPYYTTKDFLGLLLLILLLMTLTLFYPDLLGDPDNYTPANPLNTPPHIKPEWYFLFAYAILRSIPNKLGGVVALILSILILAIIPFLQPSKQQTMMFRPLSQFLFWILVADLLTLTWIGGQPVENPFISIGQTASILYFSLMVFIMPMTCLIENKMLKW.

Helical transmembrane passes span 33 to 53, 77 to 98, 113 to 133, and 178 to 198; these read FGSLLGACLTIQVITGLFLAM, WTIRYLHANGASMFFMCLFIHV, WNIGIMLLFSVMATAFMGYVL, and FFALHFILPFIISALAMIHLL. Residues H83 and H97 each coordinate heme b. Heme b-binding residues include H182 and H196. Residue H201 participates in a ubiquinone binding. Helical transmembrane passes span 226–246, 288–308, 320–340, and 347–367; these read TKDFLGLLLLILLLMTLTLFY, LGGVVALILSILILAIIPFLQ, LSQFLFWILVADLLTLTWIGG, and FISIGQTASILYFSLMVFIMP.

Belongs to the cytochrome b family. The cytochrome bc1 complex contains 11 subunits: 3 respiratory subunits (MT-CYB, CYC1 and UQCRFS1), 2 core proteins (UQCRC1 and UQCRC2) and 6 low-molecular weight proteins (UQCRH/QCR6, UQCRB/QCR7, UQCRQ/QCR8, UQCR10/QCR9, UQCR11/QCR10 and a cleavage product of UQCRFS1). This cytochrome bc1 complex then forms a dimer. The cofactor is heme b.

It localises to the mitochondrion inner membrane. Functionally, component of the ubiquinol-cytochrome c reductase complex (complex III or cytochrome b-c1 complex) that is part of the mitochondrial respiratory chain. The b-c1 complex mediates electron transfer from ubiquinol to cytochrome c. Contributes to the generation of a proton gradient across the mitochondrial membrane that is then used for ATP synthesis. The sequence is that of Cytochrome b (MT-CYB) from Lepilemur randrianasoloi (Randrianasoli's sportive lemur).